A 489-amino-acid polypeptide reads, in one-letter code: Cobyric acid synthase (489 aa).

Residues 254–442 enclose the GATase cobBQ-type domain; it reads ARVIAVPVLP…VHGLFADDRQ (189 aa). The active-site Nucleophile is Cys-336. Residue His-434 is part of the active site.

This sequence belongs to the CobB/CobQ family. CobQ subfamily.

It participates in cofactor biosynthesis; adenosylcobalamin biosynthesis. Functionally, catalyzes amidations at positions B, D, E, and G on adenosylcobyrinic A,C-diamide. NH(2) groups are provided by glutamine, and one molecule of ATP is hydrogenolyzed for each amidation. This Methylobacterium nodulans (strain LMG 21967 / CNCM I-2342 / ORS 2060) protein is Cobyric acid synthase.